Reading from the N-terminus, the 568-residue chain is Urease subunit alpha (568 aa).

In terms of domain architecture, Urease spans 131-568 (GGMDAHIHFI…LPLAQRYFLY (438 aa)). Ni(2+) is bound by residues His-136, His-138, and Lys-219. At Lys-219 the chain carries N6-carboxylysine. His-221 serves as a coordination point for substrate. 2 residues coordinate Ni(2+): His-248 and His-274. Residue His-322 is the Proton donor of the active site. Asp-362 serves as a coordination point for Ni(2+).

Belongs to the metallo-dependent hydrolases superfamily. Urease alpha subunit family. As to quaternary structure, heterotrimer of UreA (gamma), UreB (beta) and UreC (alpha) subunits. Three heterotrimers associate to form the active enzyme. Ni cation is required as a cofactor. In terms of processing, carboxylation allows a single lysine to coordinate two nickel ions.

It is found in the cytoplasm. The catalysed reaction is urea + 2 H2O + H(+) = hydrogencarbonate + 2 NH4(+). Its pathway is nitrogen metabolism; urea degradation; CO(2) and NH(3) from urea (urease route): step 1/1. This Cereibacter sphaeroides (strain ATCC 17025 / ATH 2.4.3) (Rhodobacter sphaeroides) protein is Urease subunit alpha.